Consider the following 1795-residue polypeptide: Protein TIC 214 (1795 aa).

6 consecutive transmembrane segments (helical) span residues 19 to 39, 68 to 88, 91 to 111, 133 to 153, 176 to 196, and 227 to 247; these read IINS…FSIG, FIAG…HLAL, PHTI…WNNH, VFLN…SSML, VGWL…LVWI, and IFSI…PSPI. Residues 1490 to 1517 are disordered; the sequence is EKESTGQVEFESDKEQQRNSESALSNQE. The span at 1508 to 1517 shows a compositional bias: polar residues; sequence NSESALSNQE.

Belongs to the TIC214 family. Part of the Tic complex.

It localises to the plastid. Its subcellular location is the chloroplast inner membrane. Involved in protein precursor import into chloroplasts. May be part of an intermediate translocation complex acting as a protein-conducting channel at the inner envelope. This Crucihimalaya wallichii (Rock-cress) protein is Protein TIC 214.